Here is a 344-residue protein sequence, read N- to C-terminus: Ribosomal RNA large subunit methyltransferase Cfr (344 aa).

Glutamate 90 acts as the Proton acceptor in catalysis. In terms of domain architecture, Radical SAM core spans 97-330; sequence KQGWESFCIS…ATVRTQFGSE (234 aa). The cysteines at positions 104 and 335 are disulfide-linked. The [4Fe-4S] cluster site is built by cysteine 111, cysteine 115, and cysteine 118. S-adenosyl-L-methionine contacts are provided by residues 157-158, serine 188, 211-213, and asparagine 292; these read GE and SLH. Cysteine 335 acts as the S-methylcysteine intermediate in catalysis.

Belongs to the radical SAM superfamily. RlmN family. Cfr subfamily. Requires [4Fe-4S] cluster as cofactor.

The protein localises to the cytoplasm. It carries out the reaction adenosine(2503) in 23S rRNA + 2 reduced [2Fe-2S]-[ferredoxin] + 2 S-adenosyl-L-methionine = 8-methyladenosine(2503) in 23S rRNA + 5'-deoxyadenosine + L-methionine + 2 oxidized [2Fe-2S]-[ferredoxin] + S-adenosyl-L-homocysteine. Specifically methylates position 8 of adenine 2503 in 23S rRNA. Confers resistance to some classes of antibiotics. This is Ribosomal RNA large subunit methyltransferase Cfr from Clostridium botulinum (strain Hall / ATCC 3502 / NCTC 13319 / Type A).